A 900-amino-acid chain; its full sequence is Chaperone protein ClpB 2 (900 aa).

A Clp R domain is found at 15–154; sequence PDRFSDPAWE…ESLLRQPSVS (140 aa). 2 repeat regions span residues 18 to 81 and 91 to 154; these read FSDP…LADQ and IGED…PSVS. The disordered stretch occupies residues 151–183; that stretch reads PSVSPAPAPPPVPTAASAPAPTPRSAPAPRVMA. Residues 154–163 are compositionally biased toward pro residues; that stretch reads SPAPAPPPVP. Residues 191 to 376 are NBD1; the sequence is ELEREPSALE…RRFQQVLIRE (186 aa). 244–251 is an ATP binding site; that stretch reads GEPGVGKT. A linker region spans residues 377-581; sequence PDLELSLEIL…IADLVARWTG (205 aa). Positions 427-557 form a coiled coil; the sequence is IDLIDEAAAQ…LEASQAEAQS (131 aa). The NBD2 stretch occupies residues 591–803; it reads ERRKLLALES…RIDEVIRFRP (213 aa). 641–648 lines the ATP pocket; the sequence is GPTGVGKT. The interval 804–900 is C-terminal; the sequence is LKVKDLVRIV…GASLEFEPLE (97 aa).

The protein belongs to the ClpA/ClpB family. Homohexamer. The oligomerization is ATP-dependent.

It localises to the cytoplasm. Its function is as follows. Part of a stress-induced multi-chaperone system, it is involved in the recovery of the cell from heat-induced damage, in cooperation with DnaK, DnaJ and GrpE. Acts before DnaK, in the processing of protein aggregates. Protein binding stimulates the ATPase activity; ATP hydrolysis unfolds the denatured protein aggregates, which probably helps expose new hydrophobic binding sites on the surface of ClpB-bound aggregates, contributing to the solubilization and refolding of denatured protein aggregates by DnaK. The polypeptide is Chaperone protein ClpB 2 (clpB2) (Parasynechococcus marenigrum (strain WH8102)).